A 141-amino-acid polypeptide reads, in one-letter code: Hemoglobin subunit alpha (141 aa).

The Globin domain occupies 1–141 (VLSAADKGHV…VSTVLTSKYR (141 aa)). The residue at position 3 (S3) is a Phosphoserine. N6-succinyllysine occurs at positions 7 and 11. Residue K16 is modified to N6-acetyllysine; alternate. At K16 the chain carries N6-succinyllysine; alternate. Phosphotyrosine is present on Y24. S35 carries the phosphoserine modification. At K40 the chain carries N6-succinyllysine. S49 bears the Phosphoserine mark. H58 contributes to the O2 binding site. A heme b-binding site is contributed by H87. Phosphoserine is present on S102. The residue at position 108 (T108) is a Phosphothreonine. Position 124 is a phosphoserine (S124). 2 positions are modified to phosphothreonine: T134 and T137. A Phosphoserine modification is found at S138.

This sequence belongs to the globin family. In terms of assembly, heterotetramer of two alpha chains and two beta chains. Red blood cells.

Functionally, involved in oxygen transport from the lung to the various peripheral tissues. In terms of biological role, hemopressin acts as an antagonist peptide of the cannabinoid receptor CNR1. Hemopressin-binding efficiently blocks cannabinoid receptor CNR1 and subsequent signaling. The protein is Hemoglobin subunit alpha (HBA) of Macropus giganteus (Eastern gray kangaroo).